Consider the following 375-residue polypeptide: Growth/differentiation factor 8 (375 aa).

Positions 1–23 (MQKLAVYVYIYLFMQILVHPVAL) are cleaved as a signal peptide. A propeptide spanning residues 24–266 (DGSSQPTENA…VTDTPKRSRR (243 aa)) is cleaved from the precursor. N-linked (GlcNAc...) asparagine glycosylation occurs at N71. Intrachain disulfides connect C272–C282, C281–C340, C309–C372, and C313–C374.

Belongs to the TGF-beta family. As to quaternary structure, homodimer; disulfide-linked.

The protein localises to the secreted. Functionally, acts specifically as a negative regulator of skeletal muscle growth. This is Growth/differentiation factor 8 (MSTN) from Meleagris gallopavo (Wild turkey).